A 245-amino-acid polypeptide reads, in one-letter code: Large ribosomal subunit protein eL29 (245 aa).

A compositionally biased stretch (basic residues) spans 1–26; the sequence is MAKSKNHTTHNQSRKWHRNGIKKPRS. Disordered regions lie at residues 1–33 and 114–245; these read MAKSKNHTTHNQSRKWHRNGIKKPRSQRYESLK and RGLR…AKAP. An N6-methyllysine modification is found at lysine 5. A Phosphoserine modification is found at serine 31. The residue at position 33 (lysine 33) is an N6-acetyllysine. Residues 134–150 show a composition bias toward low complexity; sequence KGKVKAQIKAQAQAQIK. The segment covering 157–171 has biased composition (basic and acidic residues); the sequence is AQAETKPKAQAETKP. Low complexity-rich tracts occupy residues 172 to 226 and 234 to 245; these read KAQA…ATPA and PPKGAQPPAKAP.

Belongs to the eukaryotic ribosomal protein eL29 family. In terms of assembly, component of the large ribosomal subunit.

The protein resides in the cytoplasm. Functionally, component of the large ribosomal subunit. The ribosome is a large ribonucleoprotein complex responsible for the synthesis of proteins in the cell. This is Large ribosomal subunit protein eL29 (RPL29) from Oryctolagus cuniculus (Rabbit).